Consider the following 442-residue polypeptide: tRNA modification GTPase MnmE (442 aa).

(6S)-5-formyl-5,6,7,8-tetrahydrofolate-binding residues include R24, E82, and K122. One can recognise a TrmE-type G domain in the interval 219-366 (GFKVALVGEP…LRRALKREIE (148 aa)). Residue N229 coordinates K(+). Residues 229 to 234 (NAGKST), 248 to 254 (TDIAGTT), and 273 to 276 (DTAG) each bind GTP. Position 233 (S233) interacts with Mg(2+). K(+)-binding residues include T248, I250, and T253. T254 is a Mg(2+) binding site. K442 lines the (6S)-5-formyl-5,6,7,8-tetrahydrofolate pocket.

It belongs to the TRAFAC class TrmE-Era-EngA-EngB-Septin-like GTPase superfamily. TrmE GTPase family. Homodimer. Heterotetramer of two MnmE and two MnmG subunits. K(+) is required as a cofactor.

It localises to the cytoplasm. Its function is as follows. Exhibits a very high intrinsic GTPase hydrolysis rate. Involved in the addition of a carboxymethylaminomethyl (cmnm) group at the wobble position (U34) of certain tRNAs, forming tRNA-cmnm(5)s(2)U34. This chain is tRNA modification GTPase MnmE, found in Agrobacterium fabrum (strain C58 / ATCC 33970) (Agrobacterium tumefaciens (strain C58)).